A 245-amino-acid chain; its full sequence is CGVPAIQPVLSGLSRIVNGEEAVPGSWPWQVSLQDKTGFHFCGGSLINENWVVTAAHCGVTTSDVVVAGEFDQGSSSEKIQKLKIAKVFKNSKYNSLTINNDITLLKLSTAASFSQTVSAVCLPSASDDFAAGTTCVTTGWGLTRYTNANTPDRLQQASLPLLSNTNCKKYWGTKIKDAMICAGASGVSSCMGDSGGPLVCKKNGAWTLVGIVSWGSSTCSTSTPGVYARVTALVNWVQQTLAAN.

5 disulfides stabilise this stretch: Cys1–Cys122, Cys42–Cys58, Cys136–Cys201, Cys168–Cys182, and Cys191–Cys220. Residues 14 to 15 (SR) constitute a propeptide that is removed on maturation. The region spanning 16-243 (IVNGEEAVPG…LVNWVQQTLA (228 aa)) is the Peptidase S1 domain. Residues His57 and Asp102 each act as charge relay system in the active site. A propeptide spanning residues 147 to 148 (TN) is cleaved from the precursor. Ser195 acts as the Charge relay system in catalysis.

It belongs to the peptidase S1 family.

The protein resides in the secreted. It localises to the extracellular space. The catalysed reaction is Preferential cleavage: Tyr-|-Xaa, Trp-|-Xaa, Phe-|-Xaa, Leu-|-Xaa.. The polypeptide is Chymotrypsinogen A (Bos taurus (Bovine)).